The chain runs to 98 residues: C-X-C motif chemokine 10 (98 aa).

The first 21 residues, 1–21 (MNQTAILICCLVFLTLSGIQG), serve as a signal peptide directing secretion. The residue at position 26 (Arg26) is a Citrulline. 2 disulfides stabilise this stretch: Cys30-Cys57 and Cys32-Cys74.

This sequence belongs to the intercrine alpha (chemokine CxC) family.

The protein localises to the secreted. In terms of biological role, chemotactic for monocytes and T-lymphocytes. Binds to CXCR3. This is C-X-C motif chemokine 10 (CXCL10) from Macaca nemestrina (Pig-tailed macaque).